The sequence spans 264 residues: MDLRPIGIFDSGVGGLTVLKRLVEVLPGEDYIYFGDTKRVPYGDRSEEEIKKFAKQILNFMREQKVKAVVIACNTTCAVINKSEYDVVLFDVLKAGAESAALYTINKKIGVIATTRTVESKSYEKNIKIIDKNIEVYQKACPEFVPLIEKGLYNSPIAYETASKCLKELKEKDIDTLVLGCTHYPLMASVIEEIMGENVKIVDPAIKLAYDVKDYLLKKDLLNPQIRGKAEFFVSGDKDNFIKTAEMLLGEKIENVLHVDIEKY.

Residues 10-11 (DS) and 42-43 (YG) each bind substrate. Cys-73 serves as the catalytic Proton donor/acceptor. A substrate-binding site is contributed by 74–75 (NT). Cys-181 serves as the catalytic Proton donor/acceptor. 182–183 (TH) serves as a coordination point for substrate.

The protein belongs to the aspartate/glutamate racemases family.

It catalyses the reaction L-glutamate = D-glutamate. It functions in the pathway cell wall biogenesis; peptidoglycan biosynthesis. Functionally, provides the (R)-glutamate required for cell wall biosynthesis. This chain is Glutamate racemase, found in Thermoanaerobacter sp. (strain X514).